The following is a 313-amino-acid chain: Probable 5-dehydro-4-deoxyglucarate dehydratase 1 (313 aa).

The protein belongs to the DapA family.

It carries out the reaction 5-dehydro-4-deoxy-D-glucarate + H(+) = 2,5-dioxopentanoate + CO2 + H2O. It participates in carbohydrate acid metabolism; D-glucarate degradation; 2,5-dioxopentanoate from D-glucarate: step 2/2. In Streptomyces avermitilis (strain ATCC 31267 / DSM 46492 / JCM 5070 / NBRC 14893 / NCIMB 12804 / NRRL 8165 / MA-4680), this protein is Probable 5-dehydro-4-deoxyglucarate dehydratase 1.